Here is a 217-residue protein sequence, read N- to C-terminus: Ras-related protein Rab-39A (217 aa).

GTP is bound by residues Ser17, Gly20, Lys21, Ser22, Cys23, and Thr44. Ser22 contacts Mg(2+). A switch-I region spans residues 39–47 (PACDPTVGV). Mg(2+) contacts are provided by Thr44 and Asp68. The GTP site is built by Gly71, His127, Lys128, Asp130, Ala158, and Lys159. Positions 71 to 87 (GQERFRSITRSYYRNSV) are switch-II. S-geranylgeranyl cysteine attachment occurs at residues Cys215 and Cys217. Cys217 is modified (cysteine methyl ester).

The protein belongs to the small GTPase superfamily. Rab family. As to quaternary structure, interacts (GDP-bound) with C9orf72; C9orf72 acts as a GEF for RAB39A. Interacts (GTP-bound) with HOPS complex components VPS39 and VPS41, and STX17; interaction between HOPS components and RAB39A contributes to obtaining a functional HOPS complex that promotes membrane fusion driven by STX17-SNAP29-VAMP8. Interacts with BECN1. Probably associates with the PI3K (PI3KC3/PI3K-III/class III phosphatidylinositol 3-kinase) complex. Interacts with UACA. Interacts with isoform a of RASSF1. Does not interact with isoform c of RASSF1. Requires Mg(2+) as cofactor. Post-translationally, prenylated. Prenylation is required for association with cellular membranes.

The protein resides in the cell membrane. It is found in the cytoplasmic vesicle. Its subcellular location is the phagosome membrane. The protein localises to the late endosome membrane. It localises to the lysosome membrane. The protein resides in the autolysosome membrane. The catalysed reaction is GTP + H2O = GDP + phosphate + H(+). Regulated by guanine nucleotide exchange factors (GEFs) including c9Orf72, which promote the exchange of bound GDP for free GTP. Regulated by GTPase activating proteins (GAPs) which increase the GTP hydrolysis activity. Inhibited by GDP dissociation inhibitors (GDIs). The small GTPases Rab are key regulators of intracellular membrane trafficking, from the formation of transport vesicles to their fusion with membranes. Rabs cycle between an inactive GDP-bound form and an active GTP-bound form that is able to recruit to membranes different sets of downstream effectors directly responsible for vesicle formation, movement, tethering and fusion. RAB39A regulates autophagosome-lysosome fusion via recruitment of the HOPS endosomal tethering complex onto lysosomes; this process involves lysosomal RAB39A and autophagosomal RAB2A recruitment of HOPS subcomplexes VPS41-VPS16-VPS18-VPS33A and VPS39-VPS11, respectively, which assemble into a functional complex to mediate membrane tethering and SNAREs-driven membrane fusion. Also negatively regulates lipopolysaccharide (LPS)-induced autophagosome formation in macrophages, possibly by implicating PI3K. Promotes the delivery of MHC-I molecules from the ER to phagosomes and the generation of peptide-loaded MHC-I complexes in phagosomes, thus enhancing antigen cross-presentation by dendritic cells. Plays a role in the maturation and acidification of phagosomes that engulf pathogens, such as S.aureus and M.tuberculosis. Plays a role in the fusion of phagosomes with lysosomes. May be involved in multiple neurite formation. This is Ras-related protein Rab-39A from Mus musculus (Mouse).